The following is a 107-amino-acid chain: Small ribosomal subunit protein uS17 (107 aa).

The protein belongs to the universal ribosomal protein uS17 family. As to quaternary structure, part of the 30S ribosomal subunit.

In terms of biological role, one of the primary rRNA binding proteins, it binds specifically to the 5'-end of 16S ribosomal RNA. In Nitrosopumilus maritimus (strain SCM1), this protein is Small ribosomal subunit protein uS17.